The primary structure comprises 260 residues: Snake venom serine protease homolog 1 (260 aa).

The signal sequence occupies residues 1–18 (MVLIRVLANLLILQLSYA). A propeptide spanning residues 19-24 (QKSSEL) is cleaved from the precursor. A Peptidase S1 domain is found at 25 to 251 (IIGGDECNIN…HLDWIKSIIA (227 aa)). Disulfide bonds link cysteine 31–cysteine 165, cysteine 52–cysteine 68, cysteine 100–cysteine 258, cysteine 144–cysteine 212, cysteine 176–cysteine 191, and cysteine 202–cysteine 227. Residues asparagine 83, asparagine 123, and asparagine 124 are each glycosylated (N-linked (GlcNAc...) asparagine).

It belongs to the peptidase S1 family. Snake venom subfamily. Expressed by the venom gland.

The protein resides in the secreted. In terms of biological role, snake venom serine protease homolog that may act in the hemostasis system of the prey. This is Snake venom serine protease homolog 1 from Trimeresurus stejnegeri (Chinese green tree viper).